A 159-amino-acid polypeptide reads, in one-letter code: Ribosomal RNA large subunit methyltransferase H (159 aa).

Residues L76, G108, and 127-132 (FGLLTL) contribute to the S-adenosyl-L-methionine site.

Belongs to the RNA methyltransferase RlmH family. In terms of assembly, homodimer.

Its subcellular location is the cytoplasm. The catalysed reaction is pseudouridine(1915) in 23S rRNA + S-adenosyl-L-methionine = N(3)-methylpseudouridine(1915) in 23S rRNA + S-adenosyl-L-homocysteine + H(+). Its function is as follows. Specifically methylates the pseudouridine at position 1915 (m3Psi1915) in 23S rRNA. The polypeptide is Ribosomal RNA large subunit methyltransferase H (Streptococcus agalactiae serotype Ia (strain ATCC 27591 / A909 / CDC SS700)).